The following is a 434-amino-acid chain: Maltotriose-binding protein (434 aa).

Residues 1 to 20 (MRRATYAFALLAILVLGVVA) form the signal peptide. Residues 28 to 52 (TTTPTQTSPATQPTTTQTPTQTETQ) form a disordered region. Residues 29 to 52 (TTPTQTSPATQPTTTQTPTQTETQ) show a composition bias toward low complexity.

Belongs to the bacterial solute-binding protein 1 family.

Involved in an abc transport system for maltotriose. Binds maltotriose much more tightly than maltose. The chain is Maltotriose-binding protein (malE) from Pyrococcus furiosus (strain ATCC 43587 / DSM 3638 / JCM 8422 / Vc1).